The following is a 284-amino-acid chain: L-ribulose-5-phosphate 3-epimerase UlaE (284 aa).

Belongs to the L-ribulose-5-phosphate 3-epimerase family.

It catalyses the reaction L-ribulose 5-phosphate = L-xylulose 5-phosphate. It functions in the pathway cofactor degradation; L-ascorbate degradation; D-xylulose 5-phosphate from L-ascorbate: step 3/4. In terms of biological role, catalyzes the isomerization of L-xylulose-5-phosphate to L-ribulose-5-phosphate. Is involved in the anaerobic L-ascorbate utilization. In Salmonella heidelberg (strain SL476), this protein is L-ribulose-5-phosphate 3-epimerase UlaE.